Consider the following 56-residue polypeptide: Photosystem II reaction center X protein (56 aa).

The helical transmembrane segment at 27-47 (IGSFLAAGALIVAPAAAALIW) threads the bilayer.

The protein belongs to the PsbX family. Type 2 subfamily. In terms of assembly, PSII consists of a core antenna complex that captures photons, and an electron transfer chain that converts photonic excitation into a charge separation. PSII forms dimeric complexes.

It localises to the cellular thylakoid membrane. Functionally, involved in the binding and/or turnover of quinones at the Q(B) site of Photosystem II. In Prochlorococcus marinus (strain NATL2A), this protein is Photosystem II reaction center X protein.